The primary structure comprises 702 residues: Polyribonucleotide nucleotidyltransferase (702 aa).

Mg(2+)-binding residues include aspartate 491 and aspartate 497. In terms of domain architecture, KH spans 558-618; that stretch reads PKMKTFMIPV…TAIEKAYQLI (61 aa). The S1 motif domain occupies 628 to 696; sequence GEKIIGPVVK…GKGKIKLQLI (69 aa).

Belongs to the polyribonucleotide nucleotidyltransferase family. The cofactor is Mg(2+).

The protein localises to the cytoplasm. It catalyses the reaction RNA(n+1) + phosphate = RNA(n) + a ribonucleoside 5'-diphosphate. Its function is as follows. Involved in mRNA degradation. Catalyzes the phosphorolysis of single-stranded polyribonucleotides processively in the 3'- to 5'-direction. The sequence is that of Polyribonucleotide nucleotidyltransferase from Spiroplasma citri.